The chain runs to 181 residues: Transmembrane protein 154 (181 aa).

The signal sequence occupies residues 1 to 22; sequence MTVPCAALVLALGLAFGQSSQG. The disordered stretch occupies residues 19–47; that stretch reads SSQGNDEESEYSGQSITEEENSEDETTRS. Residues 23-74 lie on the Extracellular side of the membrane; it reads NDEESEYSGQSITEEENSEDETTRSALATVTTEALAENVNSTHTNDTSNQVE. The chain crosses the membrane as a helical span at residues 75–95; sequence FILMVAIPLAALLILLFMVLI. Residues 96–181 are Cytoplasmic-facing; that stretch reads ATYFKSKRPK…PNPSPSDNES (86 aa). The interval 103-122 is disordered; the sequence is RPKQEPSSQGSQSALQTHEL. Residues 107 to 118 are compositionally biased toward polar residues; sequence EPSSQGSQSALQ. Tyrosine 160 is subject to Phosphotyrosine. The disordered stretch occupies residues 161–181; sequence ECLPTLKEEKEPNPSPSDNES. Serine 177 bears the Phosphoserine mark.

It localises to the membrane. In Mus musculus (Mouse), this protein is Transmembrane protein 154 (Tmem154).